A 528-amino-acid polypeptide reads, in one-letter code: Protein MGF 505-7R (528 aa).

ANK repeat units lie at residues 54–83 and 261–291; these read SIND…NLHY and NIHR…PPNT.

Belongs to the asfivirus MGF 505 family. Interacts with host STING1. Interacts with host JAK1; this interaction leads to JAK1 degradation. Interacts with host JAK2; this interaction leads to JAK2 degradation. Interacts with host RELA; this interaction inhibits NF-kappa-B promoter activity.

It localises to the host cytoplasm. In terms of biological role, plays a role in virus cell tropism, and may be required for efficient virus replication in macrophages. Interferes with host NF-kappa-B promoter activity mediated by TLR8. Mechanistically, inhibits the phosphorylation and subsequent nuclear translocation of host NF-kappa-B RELA subunit downstream of TLR8. Promotes the expression of the autophagy-related protein host ULK1 to degrade host STING and inhibit the interferon response. Also inhibits JAK1- and JAK2-mediated signaling and thus negatively regulates the IFN-gamma signaling. The polypeptide is Protein MGF 505-7R (African swine fever virus (isolate Tick/Malawi/Lil 20-1/1983) (ASFV)).